Reading from the N-terminus, the 179-residue chain is Large ribosomal subunit protein uL6 (179 aa).

The protein belongs to the universal ribosomal protein uL6 family. Part of the 50S ribosomal subunit.

Functionally, this protein binds to the 23S rRNA, and is important in its secondary structure. It is located near the subunit interface in the base of the L7/L12 stalk, and near the tRNA binding site of the peptidyltransferase center. In Metamycoplasma arthritidis (strain 158L3-1) (Mycoplasma arthritidis), this protein is Large ribosomal subunit protein uL6.